A 239-amino-acid chain; its full sequence is Large ribosomal subunit protein uL1 (239 aa).

The protein belongs to the universal ribosomal protein uL1 family. In terms of assembly, part of the 50S ribosomal subunit.

Binds directly to 23S rRNA. The L1 stalk is quite mobile in the ribosome, and is involved in E site tRNA release. Functionally, protein L1 is also a translational repressor protein, it controls the translation of the L11 operon by binding to its mRNA. The chain is Large ribosomal subunit protein uL1 from Rickettsia bellii (strain OSU 85-389).